Consider the following 321-residue polypeptide: Putative membrane-bound redox modulator Alx (321 aa).

At 1 to 6 the chain is on the periplasmic side; sequence MNTVGT. Residues 7-27 form a helical membrane-spanning segment; that stretch reads PLLWGGFAVVVTIMLAIDLLL. The Cytoplasmic portion of the chain corresponds to 28–43; the sequence is QGRRGAHAMTMKQAAA. The chain crosses the membrane as a helical span at residues 44–64; that stretch reads WSLVWVTLSLLFNAAFWWYLV. At 65–89 the chain is on the periplasmic side; it reads QTEGRAVADPQALAFLTGYLIEKSL. Residues 90 to 110 form a helical membrane-spanning segment; the sequence is AVDNVFVWLMLFSYFSVPAAL. The Cytoplasmic segment spans residues 111 to 113; the sequence is QRR. The helical transmembrane segment at 114 to 134 threads the bilayer; that stretch reads VLVYGVLGAIVLRTIMIFTGS. Residue tryptophan 135 is a topological domain, periplasmic. A helical transmembrane segment spans residues 136-156; the sequence is LISQFDWILYIFGAFLLFTGV. Over 157-198 the chain is Cytoplasmic; sequence KMALAHEDESGIGDKPLVRWLRGHLRMTDTIDNEHFFVRKNG. A helical transmembrane segment spans residues 199 to 219; the sequence is LLYATPLMLVLILVELSDVIF. Over 220–225 the chain is Periplasmic; it reads AVDSIP. The helical transmembrane segment at 226-246 threads the bilayer; the sequence is AIFAVTTDPFIVLTSNLFAIL. Residues 247 to 261 lie on the Cytoplasmic side of the membrane; the sequence is GLRAMYFLLAGVAER. Residues 262-282 form a helical membrane-spanning segment; sequence FSMLKYGLAVILVFIGIKMLI. Residues 283 to 286 lie on the Periplasmic side of the membrane; that stretch reads VDFY. Residues 287–307 form a helical membrane-spanning segment; that stretch reads HIPIAVSLGVVFGILVMTFII. The Cytoplasmic segment spans residues 308–321; sequence NAWVNYRHDKQRVE.

Belongs to the TerC family.

The protein resides in the cell inner membrane. Its function is as follows. Has been proposed to be a redox modulator. The polypeptide is Putative membrane-bound redox modulator Alx (alx) (Escherichia coli O6:H1 (strain CFT073 / ATCC 700928 / UPEC)).